The primary structure comprises 188 residues: Elongation factor P (188 aa).

Lys-34 is modified (N6-(3,6-diaminohexanoyl)-5-hydroxylysine).

This sequence belongs to the elongation factor P family. In terms of processing, may be beta-lysylated on the epsilon-amino group of Lys-34 by the combined action of EpmA and EpmB, and then hydroxylated on the C5 position of the same residue by EpmC (if this protein is present). Lysylation is critical for the stimulatory effect of EF-P on peptide-bond formation. The lysylation moiety may extend toward the peptidyltransferase center and stabilize the terminal 3-CCA end of the tRNA. Hydroxylation of the C5 position on Lys-34 may allow additional potential stabilizing hydrogen-bond interactions with the P-tRNA.

It is found in the cytoplasm. It functions in the pathway protein biosynthesis; polypeptide chain elongation. Its function is as follows. Involved in peptide bond synthesis. Alleviates ribosome stalling that occurs when 3 or more consecutive Pro residues or the sequence PPG is present in a protein, possibly by augmenting the peptidyl transferase activity of the ribosome. Modification of Lys-34 is required for alleviation. The sequence is that of Elongation factor P from Cronobacter sakazakii (strain ATCC BAA-894) (Enterobacter sakazakii).